The sequence spans 670 residues: Transcription factor Ken 2 (670 aa).

Residues 108 to 176 (TDLLLICDGK…LYSGQVYVRS (69 aa)) form the BTB domain. Disordered regions lie at residues 200–288 (SDGS…DRDR) and 307–470 (NNHP…SDDA). Over residues 218–230 (NRNTEGITGSSVV) the composition is skewed to polar residues. Residues 325 to 338 (HHLHHHHHHHHRQL) are compositionally biased toward basic residues. Gly residues-rich tracts occupy residues 351-368 (GGGS…GESG) and 389-400 (SGGGGAGSGRRS). A compositionally biased stretch (acidic residues) spans 407 to 419 (EPAEDDEDYELDV). Residues 451-464 (SDPVNLSIVKQQQD) are compositionally biased toward polar residues. The C2H2-type 1; degenerate zinc finger occupies 586–594 (NLKTHLRVH). C2H2-type zinc fingers lie at residues 600–623 (FACR…CSVH) and 636–658 (YTCC…LSGH).

It localises to the nucleus. Functionally, transcription factor required for terminalia development. Negative regulator of the JAK/STAT pathway: represses JAK/STAT-dependent expression of ventral veins lacking (vvl) in the posterior spiracles. In Culex quinquefasciatus (Southern house mosquito), this protein is Transcription factor Ken 2.